A 249-amino-acid polypeptide reads, in one-letter code: Ubiquinone biosynthesis O-methyltransferase (249 aa).

4 residues coordinate S-adenosyl-L-methionine: Arg-41, Gly-72, Asp-93, and Met-136.

Belongs to the methyltransferase superfamily. UbiG/COQ3 family.

The catalysed reaction is a 3-demethylubiquinol + S-adenosyl-L-methionine = a ubiquinol + S-adenosyl-L-homocysteine + H(+). It carries out the reaction a 3-(all-trans-polyprenyl)benzene-1,2-diol + S-adenosyl-L-methionine = a 2-methoxy-6-(all-trans-polyprenyl)phenol + S-adenosyl-L-homocysteine + H(+). Its pathway is cofactor biosynthesis; ubiquinone biosynthesis. Functionally, O-methyltransferase that catalyzes the 2 O-methylation steps in the ubiquinone biosynthetic pathway. The chain is Ubiquinone biosynthesis O-methyltransferase from Methylobacterium sp. (strain 4-46).